We begin with the raw amino-acid sequence, 428 residues long: Monocarboxylate transporter 13 (428 aa).

The Cytoplasmic portion of the chain corresponds to 1-10; sequence MVHRTEPPDG. The next 12 membrane-spanning stretches (helical) occupy residues 11–31, 52–72, 81–101, 106–126, 139–159, 172–192, 221–241, 244–264, 283–303, 309–329, 338–358, and 374–394; these read GWGW…FGVL, VSWI…IGSA, PVVM…SFAT, LYLS…TPTL, LAMG…APLF, LLLV…LRPL, VALT…VAHL, LGWD…SDLV, LLML…VAQA, VLAV…FSVI, IYCG…LGAP, and FVVA…LPHF. The Cytoplasmic portion of the chain corresponds to 395–428; the sequence is FSCISLSTSRPQDLVIEAPDTKIPLPKEEGLGEN.

This sequence belongs to the major facilitator superfamily. Monocarboxylate porter (TC 2.A.1.13) family.

The protein resides in the golgi apparatus membrane. Its subcellular location is the cell membrane. Functionally, proton-linked monocarboxylate transporter. May catalyze the transport of monocarboxylates across the plasma membrane. The polypeptide is Monocarboxylate transporter 13 (Slc16a13) (Rattus norvegicus (Rat)).